We begin with the raw amino-acid sequence, 702 residues long: Ribosomal RNA large subunit methyltransferase K/L (702 aa).

The THUMP domain occupies 43–154; it reads LVYQSLMWSR…KETASIALDL (112 aa).

This sequence belongs to the methyltransferase superfamily. RlmKL family.

It is found in the cytoplasm. It carries out the reaction guanosine(2445) in 23S rRNA + S-adenosyl-L-methionine = N(2)-methylguanosine(2445) in 23S rRNA + S-adenosyl-L-homocysteine + H(+). It catalyses the reaction guanosine(2069) in 23S rRNA + S-adenosyl-L-methionine = N(2)-methylguanosine(2069) in 23S rRNA + S-adenosyl-L-homocysteine + H(+). In terms of biological role, specifically methylates the guanine in position 2445 (m2G2445) and the guanine in position 2069 (m7G2069) of 23S rRNA. This chain is Ribosomal RNA large subunit methyltransferase K/L, found in Escherichia coli (strain K12 / DH10B).